A 208-amino-acid polypeptide reads, in one-letter code: Ribosomal RNA large subunit methyltransferase E (208 aa).

Residues Gly-61, Trp-63, Asp-81, Asp-97, and Asp-122 each coordinate S-adenosyl-L-methionine. Residue Lys-162 is the Proton acceptor of the active site.

This sequence belongs to the class I-like SAM-binding methyltransferase superfamily. RNA methyltransferase RlmE family.

The protein localises to the cytoplasm. The catalysed reaction is uridine(2552) in 23S rRNA + S-adenosyl-L-methionine = 2'-O-methyluridine(2552) in 23S rRNA + S-adenosyl-L-homocysteine + H(+). Functionally, specifically methylates the uridine in position 2552 of 23S rRNA at the 2'-O position of the ribose in the fully assembled 50S ribosomal subunit. The chain is Ribosomal RNA large subunit methyltransferase E from Pseudomonas putida (strain GB-1).